The primary structure comprises 64 residues: DNA gyrase inhibitor YacG (64 aa).

Zn(2+)-binding residues include cysteine 9, cysteine 12, cysteine 28, and cysteine 32. A disordered region spans residues 45–64 (KRIPSSGDLSESDDWSEEPK). A compositionally biased stretch (acidic residues) spans 54-64 (SESDDWSEEPK).

Belongs to the DNA gyrase inhibitor YacG family. As to quaternary structure, interacts with GyrB. Requires Zn(2+) as cofactor.

Functionally, inhibits all the catalytic activities of DNA gyrase by preventing its interaction with DNA. Acts by binding directly to the C-terminal domain of GyrB, which probably disrupts DNA binding by the gyrase. The chain is DNA gyrase inhibitor YacG from Escherichia fergusonii (strain ATCC 35469 / DSM 13698 / CCUG 18766 / IAM 14443 / JCM 21226 / LMG 7866 / NBRC 102419 / NCTC 12128 / CDC 0568-73).